A 209-amino-acid polypeptide reads, in one-letter code: MKTSQWIDISQPLNNDIATWPGDTPFSYEVSWSKENSGSVNVGKLTMSIHTGTHIDAPFHFDNDGKKVLDLDIQVYVGPARIIDVSNLESIGKKELENFHLEGVERLLLRTSSHGKANEFPDVIPHLRADIAAFLSEKGIRLIGVDVPSVDPLDDKELAAHHQLFKHGIHILENVVLDHVVDGDYELIALPLALTDADGSPVRAVIRPI.

Trp20 contacts substrate. 3 residues coordinate Zn(2+): His50, His54, and Asp56. The active-site Proton donor/acceptor is His60. Zn(2+)-binding residues include His161 and Glu173.

The protein belongs to the Cyclase 1 superfamily. KynB family. As to quaternary structure, homodimer. Zn(2+) serves as cofactor.

The catalysed reaction is N-formyl-L-kynurenine + H2O = L-kynurenine + formate + H(+). It participates in amino-acid degradation; L-tryptophan degradation via kynurenine pathway; L-kynurenine from L-tryptophan: step 2/2. Catalyzes the hydrolysis of N-formyl-L-kynurenine to L-kynurenine, the second step in the kynurenine pathway of tryptophan degradation. The chain is Kynurenine formamidase from Bacillus mycoides (strain KBAB4) (Bacillus weihenstephanensis).